The chain runs to 346 residues: Heat-inducible transcription repressor HrcA (346 aa).

The protein belongs to the HrcA family.

Its function is as follows. Negative regulator of class I heat shock genes (grpE-dnaK-dnaJ and groELS operons). Prevents heat-shock induction of these operons. This is Heat-inducible transcription repressor HrcA from Pediococcus pentosaceus (strain ATCC 25745 / CCUG 21536 / LMG 10740 / 183-1w).